We begin with the raw amino-acid sequence, 161 residues long: Transcriptional repressor NrdR (161 aa).

Residues 3–34 fold into a zinc finger; that stretch reads CPYCGARDARVIDSRELNGGESIRRRRECIAC. The ATP-cone domain maps to 49–139; sequence LMVVKRDGRR…VYRRFADLED (91 aa).

This sequence belongs to the NrdR family. The cofactor is Zn(2+).

Negatively regulates transcription of bacterial ribonucleotide reductase nrd genes and operons by binding to NrdR-boxes. The protein is Transcriptional repressor NrdR of Thermomicrobium roseum (strain ATCC 27502 / DSM 5159 / P-2).